Here is a 468-residue protein sequence, read N- to C-terminus: Tripartite motif-containing protein 75 (468 aa).

The RING-type zinc-finger motif lies at 16–57 (CSICLDYLSDPVTIECGHNFCRSCIQQSWLDLQELFPCPVCR). The segment at 92–133 (EETTLCEKHNQPLSVFCKEDLMVLCPLCTQPPDHQGHHVRPI) adopts a B box-type zinc-finger fold. 4 residues coordinate Zn(2+): Cys97, His100, Cys119, and His125. The stretch at 170–222 (LELREMVENQRQELSSEFEHLNQFLDREQQAVLSRLAEEEKDNQQKLSANITA) forms a coiled coil. One can recognise a B30.2/SPRY domain in the interval 276-468 (CSFPPQYSAL…LRICTGTVCE (193 aa)).

This sequence belongs to the TRIM/RBCC family.

It localises to the cytoplasm. It is found in the cytoskeleton. Its subcellular location is the spindle. Functionally, may play a role in female meiosis. In Homo sapiens (Human), this protein is Tripartite motif-containing protein 75.